The primary structure comprises 359 residues: Pyruvate dehydrogenase E1 component subunit beta, mitochondrial (359 aa).

Residues 1-30 (MAAVSGLVRRPLREVSGLLKRRFHWTAPAA) constitute a mitochondrion transit peptide. The residue at position 67 (Tyr67) is a Phosphotyrosine. Thiamine diphosphate is bound at residue Glu89. Residues Ile142, Ala190, Ile191, Asp193, and Asn195 each contribute to the K(+) site. Lys354 is subject to N6-acetyllysine.

As to quaternary structure, heterotetramer of two PDHA1 and two PDHB subunits. The heterotetramer interacts with DLAT, and is part of the multimeric pyruvate dehydrogenase complex that contains multiple copies of pyruvate dehydrogenase (E1), dihydrolipoamide acetyltransferase (DLAT, E2) and lipoamide dehydrogenase (DLD, E3). These subunits are bound to an inner core composed of about 48 DLAT and 12 PDHX molecules. Interacts with DLAT. Thiamine diphosphate serves as cofactor.

The protein resides in the mitochondrion matrix. The enzyme catalyses N(6)-[(R)-lipoyl]-L-lysyl-[protein] + pyruvate + H(+) = N(6)-[(R)-S(8)-acetyldihydrolipoyl]-L-lysyl-[protein] + CO2. Its function is as follows. The pyruvate dehydrogenase complex catalyzes the overall conversion of pyruvate to acetyl-CoA and CO(2), and thereby links the glycolytic pathway to the tricarboxylic cycle. The protein is Pyruvate dehydrogenase E1 component subunit beta, mitochondrial (PDHB) of Homo sapiens (Human).